A 943-amino-acid polypeptide reads, in one-letter code: Lactoferrin-binding protein A (943 aa).

The N-terminal stretch at 1 to 27 (MNKKHGFPLTLTALAIATAFPAYAAQA) is a signal peptide. Residues 52–178 (RRSKEATGLG…LGGAVAFRTK (127 aa)) form the TBDR plug domain. Residues 189 to 943 (SWGIQAKTAY…NFSLALEMKF (755 aa)) enclose the TBDR beta-barrel domain. The TonB C-terminal box motif lies at 926–943 (GRYAAPGRNFSLALEMKF).

It belongs to the TonB-dependent receptor family.

It localises to the cell outer membrane. Its function is as follows. Unknown. May be an iron-siderophore receptor. This chain is Lactoferrin-binding protein A (lbpA), found in Neisseria meningitidis serogroup B (strain ATCC BAA-335 / MC58).